The chain runs to 113 residues: Beta-microseminoprotein (113 aa).

The first 20 residues, 1 to 20 (MEAWLGSLLFLATMVIASKA), serve as a signal peptide directing secretion. Cystine bridges form between Cys-22-Cys-69, Cys-38-Cys-61, Cys-56-Cys-92, Cys-59-Cys-68, and Cys-83-Cys-106.

This sequence belongs to the beta-microseminoprotein family. As to quaternary structure, homodimer; Interacts with PI16.

It localises to the secreted. The protein is Beta-microseminoprotein (Msmb) of Mus musculus (Mouse).